The following is a 396-amino-acid chain: NADH-quinone oxidoreductase subunit D (396 aa).

Belongs to the complex I 49 kDa subunit family. NDH-1 is composed of 14 different subunits. Subunits NuoB, C, D, E, F, and G constitute the peripheral sector of the complex.

It localises to the cell inner membrane. It catalyses the reaction a quinone + NADH + 5 H(+)(in) = a quinol + NAD(+) + 4 H(+)(out). NDH-1 shuttles electrons from NADH, via FMN and iron-sulfur (Fe-S) centers, to quinones in the respiratory chain. The immediate electron acceptor for the enzyme in this species is believed to be ubiquinone. Couples the redox reaction to proton translocation (for every two electrons transferred, four hydrogen ions are translocated across the cytoplasmic membrane), and thus conserves the redox energy in a proton gradient. This chain is NADH-quinone oxidoreductase subunit D, found in Bartonella henselae (strain ATCC 49882 / DSM 28221 / CCUG 30454 / Houston 1) (Rochalimaea henselae).